The sequence spans 121 residues: UPF0102 protein DehaBAV1_0707 (121 aa).

The protein belongs to the UPF0102 family.

The polypeptide is UPF0102 protein DehaBAV1_0707 (Dehalococcoides mccartyi (strain ATCC BAA-2100 / JCM 16839 / KCTC 5957 / BAV1)).